Reading from the N-terminus, the 476-residue chain is Cysteine--tRNA ligase (476 aa).

C28 is a Zn(2+) binding site. The 'HIGH' region signature appears at 30-40; it reads PTVYDNTHLGH. 3 residues coordinate Zn(2+): C208, H233, and E237. The short motif at 265–269 is the 'KMSKS' region element; sequence KMSKS. K268 is a binding site for ATP.

The protein belongs to the class-I aminoacyl-tRNA synthetase family. Requires Zn(2+) as cofactor.

The protein localises to the cytoplasm. The catalysed reaction is tRNA(Cys) + L-cysteine + ATP = L-cysteinyl-tRNA(Cys) + AMP + diphosphate. In Methanococcus maripaludis (strain DSM 14266 / JCM 13030 / NBRC 101832 / S2 / LL), this protein is Cysteine--tRNA ligase.